The primary structure comprises 313 residues: Porphobilinogen deaminase (313 aa).

Residue C241 is modified to S-(dipyrrolylmethanemethyl)cysteine.

It belongs to the HMBS family. Monomer. It depends on dipyrromethane as a cofactor.

The enzyme catalyses 4 porphobilinogen + H2O = hydroxymethylbilane + 4 NH4(+). The protein operates within porphyrin-containing compound metabolism; protoporphyrin-IX biosynthesis; coproporphyrinogen-III from 5-aminolevulinate: step 2/4. Functionally, tetrapolymerization of the monopyrrole PBG into the hydroxymethylbilane pre-uroporphyrinogen in several discrete steps. This chain is Porphobilinogen deaminase, found in Sulfurimonas denitrificans (strain ATCC 33889 / DSM 1251) (Thiomicrospira denitrificans (strain ATCC 33889 / DSM 1251)).